Reading from the N-terminus, the 309-residue chain is UDP-3-O-acyl-N-acetylglucosamine deacetylase (309 aa).

Positions 78, 235, and 239 each coordinate Zn(2+). His-262 serves as the catalytic Proton donor.

Belongs to the LpxC family. The cofactor is Zn(2+).

The enzyme catalyses a UDP-3-O-[(3R)-3-hydroxyacyl]-N-acetyl-alpha-D-glucosamine + H2O = a UDP-3-O-[(3R)-3-hydroxyacyl]-alpha-D-glucosamine + acetate. Its pathway is glycolipid biosynthesis; lipid IV(A) biosynthesis; lipid IV(A) from (3R)-3-hydroxytetradecanoyl-[acyl-carrier-protein] and UDP-N-acetyl-alpha-D-glucosamine: step 2/6. In terms of biological role, catalyzes the hydrolysis of UDP-3-O-myristoyl-N-acetylglucosamine to form UDP-3-O-myristoylglucosamine and acetate, the committed step in lipid A biosynthesis. The protein is UDP-3-O-acyl-N-acetylglucosamine deacetylase of Syntrophotalea carbinolica (strain DSM 2380 / NBRC 103641 / GraBd1) (Pelobacter carbinolicus).